A 509-amino-acid chain; its full sequence is Maturase K (509 aa).

It belongs to the intron maturase 2 family. MatK subfamily.

It localises to the plastid. The protein resides in the chloroplast. Its function is as follows. Usually encoded in the trnK tRNA gene intron. Probably assists in splicing its own and other chloroplast group II introns. This chain is Maturase K, found in Anthocercis viscosa (Sticky tailflower).